Reading from the N-terminus, the 184-residue chain is Transcription termination/antitermination protein NusG (184 aa).

A KOW domain is found at 133 to 163 (EGDQVRVVSGPFADFTGTVTEINPERGKVKV).

The protein belongs to the NusG family.

Its function is as follows. Participates in transcription elongation, termination and antitermination. The protein is Transcription termination/antitermination protein NusG of Thermus thermophilus (strain ATCC 27634 / DSM 579 / HB8).